A 912-amino-acid chain; its full sequence is Lateral signaling target protein 2 homolog (912 aa).

Residues 323–332 show a composition bias toward low complexity; that stretch reads NVNTSNNSDN. Disordered stretches follow at residues 323 to 360, 455 to 610, 664 to 745, and 769 to 846; these read NVNT…SSFY, ADSG…ESSQ, NSSP…ASSA, and GGGS…APPR. Residues 333–355 show a composition bias toward basic and acidic residues; sequence SDSRVDDSPNDELRHESETRDNR. The segment covering 455-468 has biased composition (polar residues); sequence ADSGLGTANPSVDN. Positions 486–505 are enriched in acidic residues; it reads SSEEGEIDEYDNEEDDEDSD. The segment covering 530–544 has biased composition (basic residues); that stretch reads YRTHKQQHHHRHRRS. 2 stretches are compositionally biased toward polar residues: residues 545–556 and 572–590; these read SGSIMSATSSRK and VPSN…DTSP. Over residues 591–610 the composition is skewed to low complexity; it reads SSGNQSECSSTSSTTGESSQ. The span at 682–699 shows a compositional bias: basic and acidic residues; that stretch reads DKPKEPDPTDLFEFRASE. 4 stretches are compositionally biased toward polar residues: residues 705-717, 735-745, 780-801, and 822-834; these read PGQN…QSIY, PGTSPIRASSA, ERSV…ATDS, and SRSS…NGTS. An FYVE-type zinc finger spans residues 850-910; the sequence is DGDAPRCMAC…VCRDCYVREV (61 aa). Residues Cys-856, Cys-859, Cys-872, Cys-875, Cys-880, Cys-883, Cys-902, and Cys-905 each contribute to the Zn(2+) site.

It belongs to the lst-2 family.

Its function is as follows. Negative regulator of epidermal growth factor receptor (EGFR) signaling. In Aedes aegypti (Yellowfever mosquito), this protein is Lateral signaling target protein 2 homolog.